A 318-amino-acid polypeptide reads, in one-letter code: Protoheme IX farnesyltransferase (318 aa).

9 consecutive transmembrane segments (helical) span residues 27–47 (IMML…GMTG), 52–72 (PAMA…AGAI), 103–123 (LTMG…ASNW), 124–144 (LAAA…TMWL), 152–172 (IVIG…AVTG), 179–199 (WILF…LSLL), 225–245 (ILVY…TGLG), 248–268 (IYGA…VAIL), and 288–308 (AFLF…VEHA).

This sequence belongs to the UbiA prenyltransferase family. Protoheme IX farnesyltransferase subfamily. In terms of assembly, interacts with CtaA.

The protein resides in the cell inner membrane. The enzyme catalyses heme b + (2E,6E)-farnesyl diphosphate + H2O = Fe(II)-heme o + diphosphate. It participates in porphyrin-containing compound metabolism; heme O biosynthesis; heme O from protoheme: step 1/1. Converts heme B (protoheme IX) to heme O by substitution of the vinyl group on carbon 2 of heme B porphyrin ring with a hydroxyethyl farnesyl side group. The protein is Protoheme IX farnesyltransferase of Hyphomonas neptunium (strain ATCC 15444).